The chain runs to 96 residues: Large ribosomal subunit protein eL14 (96 aa).

Belongs to the eukaryotic ribosomal protein eL14 family.

In Desulfurococcus amylolyticus (strain DSM 18924 / JCM 16383 / VKM B-2413 / 1221n) (Desulfurococcus kamchatkensis), this protein is Large ribosomal subunit protein eL14.